The sequence spans 467 residues: Argininosuccinate lyase (467 aa).

This sequence belongs to the lyase 1 family. Argininosuccinate lyase subfamily.

It localises to the cytoplasm. The enzyme catalyses 2-(N(omega)-L-arginino)succinate = fumarate + L-arginine. It participates in amino-acid biosynthesis; L-arginine biosynthesis; L-arginine from L-ornithine and carbamoyl phosphate: step 3/3. The protein is Argininosuccinate lyase of Allorhizobium ampelinum (strain ATCC BAA-846 / DSM 112012 / S4) (Agrobacterium vitis (strain S4)).